Reading from the N-terminus, the 463-residue chain is D-inositol 3-phosphate glycosyltransferase (463 aa).

His-40 contacts 1D-myo-inositol 3-phosphate. Residues 46–47 (QP) and Gly-54 contribute to the UDP-N-acetyl-alpha-D-glucosamine site. 1D-myo-inositol 3-phosphate is bound by residues 51–56 (DAGGMN), Lys-109, Tyr-142, Thr-166, and Arg-186. 3 residues coordinate UDP-N-acetyl-alpha-D-glucosamine: Arg-260, Lys-265, and Gln-318. Phe-327, His-328, and Val-330 together coordinate Mg(2+). UDP-N-acetyl-alpha-D-glucosamine is bound by residues Glu-340 and Glu-348. Thr-354 contacts Mg(2+). The segment at 443 to 463 (VRDPVAARKPRRWTARRGVGA) is disordered.

The protein belongs to the glycosyltransferase group 1 family. MshA subfamily. Homodimer.

It carries out the reaction 1D-myo-inositol 3-phosphate + UDP-N-acetyl-alpha-D-glucosamine = 1D-myo-inositol 2-acetamido-2-deoxy-alpha-D-glucopyranoside 3-phosphate + UDP + H(+). In terms of biological role, catalyzes the transfer of a N-acetyl-glucosamine moiety to 1D-myo-inositol 3-phosphate to produce 1D-myo-inositol 2-acetamido-2-deoxy-glucopyranoside 3-phosphate in the mycothiol biosynthesis pathway. This chain is D-inositol 3-phosphate glycosyltransferase, found in Mycobacterium ulcerans (strain Agy99).